A 411-amino-acid polypeptide reads, in one-letter code: D-galactonate dehydratase family member SBI_01856 (411 aa).

Substrate contacts are provided by N45 and H130. Y167 (proton donor/acceptor) is an active-site residue. D219 is a Mg(2+) binding site. Catalysis depends on H221, which acts as the Proton donor/acceptor. The Mg(2+) site is built by E245 and E271. Residues E271, R292, H321, D325, and E348 each contribute to the substrate site.

Belongs to the mandelate racemase/muconate lactonizing enzyme family. GalD subfamily. Requires Mg(2+) as cofactor.

The enzyme catalyses D-gluconate = 2-dehydro-3-deoxy-D-gluconate + H2O. Functionally, has low D-gluconate dehydratase activity (in vitro), suggesting that it has no significant role in D-gluconate degradation in vivo. Has no detectable activity with a panel of 70 other acid sugars (in vitro). The sequence is that of D-galactonate dehydratase family member SBI_01856 from Streptomyces bingchenggensis (strain BCW-1).